The following is a 353-amino-acid chain: Photosystem II protein D1 (353 aa).

T2 carries the N-acetylthreonine modification. Position 2 is a phosphothreonine (T2). 3 helical membrane-spanning segments follow: residues 29–46 (YIGW…TATS), 118–133 (HFLL…EWEL), and 142–156 (WIAV…AATA). H118 serves as a coordination point for chlorophyll a. Residue Y126 participates in pheophytin a binding. Residues D170 and E189 each coordinate [CaMn4O5] cluster. Residues 197 to 218 (FHMLGVAGVFGGSLFSAMHGSL) form a helical membrane-spanning segment. H198 contributes to the chlorophyll a binding site. Residues H215 and 264-265 (SF) each bind a quinone. H215 contributes to the Fe cation binding site. A Fe cation-binding site is contributed by H272. Residues 274–288 (FLAAWPVAGIWFTAL) traverse the membrane as a helical segment. The [CaMn4O5] cluster site is built by H332, E333, D342, and A344. The propeptide occupies 345–353 (AVESISIGG).

It belongs to the reaction center PufL/M/PsbA/D family. PSII is composed of 1 copy each of membrane proteins PsbA, PsbB, PsbC, PsbD, PsbE, PsbF, PsbH, PsbI, PsbJ, PsbK, PsbL, PsbM, PsbT, PsbX, PsbY, PsbZ, Psb30/Ycf12, at least 3 peripheral proteins of the oxygen-evolving complex and a large number of cofactors. It forms dimeric complexes. It depends on The D1/D2 heterodimer binds P680, chlorophylls that are the primary electron donor of PSII, and subsequent electron acceptors. It shares a non-heme iron and each subunit binds pheophytin, quinone, additional chlorophylls, carotenoids and lipids. D1 provides most of the ligands for the Mn4-Ca-O5 cluster of the oxygen-evolving complex (OEC). There is also a Cl(-1) ion associated with D1 and D2, which is required for oxygen evolution. The PSII complex binds additional chlorophylls, carotenoids and specific lipids. as a cofactor. In terms of processing, tyr-161 forms a radical intermediate that is referred to as redox-active TyrZ, YZ or Y-Z. Post-translationally, C-terminally processed by CTPA; processing is essential to allow assembly of the oxygen-evolving complex and thus photosynthetic growth.

It is found in the plastid. It localises to the chloroplast thylakoid membrane. The catalysed reaction is 2 a plastoquinone + 4 hnu + 2 H2O = 2 a plastoquinol + O2. Functionally, photosystem II (PSII) is a light-driven water:plastoquinone oxidoreductase that uses light energy to abstract electrons from H(2)O, generating O(2) and a proton gradient subsequently used for ATP formation. It consists of a core antenna complex that captures photons, and an electron transfer chain that converts photonic excitation into a charge separation. The D1/D2 (PsbA/PsbD) reaction center heterodimer binds P680, the primary electron donor of PSII as well as several subsequent electron acceptors. This chain is Photosystem II protein D1, found in Pinus contorta (Shore pine).